Consider the following 345-residue polypeptide: Protein RecA (345 aa).

65 to 72 (GPESSGKT) contributes to the ATP binding site.

It belongs to the RecA family.

It is found in the cytoplasm. Its function is as follows. Can catalyze the hydrolysis of ATP in the presence of single-stranded DNA, the ATP-dependent uptake of single-stranded DNA by duplex DNA, and the ATP-dependent hybridization of homologous single-stranded DNAs. It interacts with LexA causing its activation and leading to its autocatalytic cleavage. The protein is Protein RecA of Campylobacter fetus subsp. fetus (strain 82-40).